The primary structure comprises 378 residues: Atypical chemokine receptor 2 (378 aa).

The Extracellular portion of the chain corresponds to 1–49 (MPTVASPLPLTTVGSENSSSIYDYDYLDDMTILVCRKDEVLSFGRVFLP). The N-linked (GlcNAc...) asparagine glycan is linked to Asn-17. The chain crosses the membrane as a helical span at residues 50-70 (VVYSLIFVLGLAGNLLLLVVL). The Cytoplasmic segment spans residues 71-91 (LHSAPRRRTMELYLLNLAVSN). Residues 92–112 (LLFVVTMPFWAISVAWHWVFG) form a helical membrane-spanning segment. Topologically, residues 113 to 117 (SFLCK) are extracellular. Cysteines 116 and 194 form a disulfide. Residues 118–139 (VISTLYSINFYCGIFFITCMSL) traverse the membrane as a helical segment. Over 140–161 (DKYLEIVHAQPLHRPKAQFRNL) the chain is Cytoplasmic. Residues 162 to 182 (LLIVMVWITSLAISVPEMVFV) form a helical membrane-spanning segment. The Extracellular segment spans residues 183-216 (QIHQTLDGVWHCYADFGGHATIWKLYLRFQLNLL). Residues 217–237 (GFLLPLLAMIFFYSRIGCVLV) traverse the membrane as a helical segment. Topologically, residues 238–249 (RLRPPGQGRALR) are cytoplasmic. Residues 250 to 270 (MAAALVIVFFMLWFPYNLTLF) form a helical membrane-spanning segment. Residues 271–292 (LHSLLDLHVFGNCEISHRLDYT) lie on the Extracellular side of the membrane. A helical membrane pass occupies residues 293 to 313 (LQVTESLAFSHCCFTPVLYAF). The Cytoplasmic segment spans residues 314–378 (CSHRFRRYLK…SLNKGEMGNT (65 aa)). Residues 326–378 (LSVMLRWHQAPGTPSSNHSESSRVTAQEDVVSMNDLGERQSEDSLNKGEMGNT) form a C-terminal cytoplasmic tail region.

It belongs to the G-protein coupled receptor 1 family. Atypical chemokine receptor subfamily. Phosphorylated on serine residues in the C-terminal cytoplasmic tail. As to expression, expressed on apoptotic neutrophils (at protein level).

The protein resides in the early endosome. Its subcellular location is the recycling endosome. It is found in the cell membrane. Its function is as follows. Atypical chemokine receptor that controls chemokine levels and localization via high-affinity chemokine binding that is uncoupled from classic ligand-driven signal transduction cascades, resulting instead in chemokine sequestration, degradation, or transcytosis. Also known as interceptor (internalizing receptor) or chemokine-scavenging receptor or chemokine decoy receptor. Acts as a receptor for chemokines including CCL2, CCL3, CCL3L1, CCL4, CCL5, CCL7, CCL8, CCL11, CCL13, CCL17, CCL22, CCL23, CCL24, SCYA2/MCP-1, SCY3/MIP-1-alpha, SCYA5/RANTES and SCYA7/MCP-3. Upon active ligand stimulation, activates a beta-arrestin 1 (ARRB1)-dependent, G protein-independent signaling pathway that results in the phosphorylation of the actin-binding protein cofilin (CFL1) through a RAC1-PAK1-LIMK1 signaling pathway. Activation of this pathway results in up-regulation of ACKR2 from endosomal compartment to cell membrane, increasing its efficiency in chemokine uptake and degradation. By scavenging chemokines in tissues, on the surfaces of lymphatic vessels, and in placenta, plays an essential role in the resolution (termination) of the inflammatory response and in the regulation of adaptive immune responses. Plays a major role in the immune silencing of macrophages during the resolution of inflammation. Acts as a regulator of inflammatory leukocyte interactions with lymphatic endothelial cells (LECs) and is required for immature/mature dendritic cells discrimination by LECs. The polypeptide is Atypical chemokine receptor 2 (Ackr2) (Mus musculus (Mouse)).